Consider the following 137-residue polypeptide: Maltose regulon regulatory protein MalI (137 aa).

In terms of domain architecture, HTH lacI-type spans Val-6–Ser-60. Positions Ile-8–Gly-27 form a DNA-binding region, H-T-H motif.

In terms of biological role, repressor for the malX and malY genes. The chain is Maltose regulon regulatory protein MalI (malI) from Vibrio furnissii.